The chain runs to 557 residues: uncharacterized protein (557 aa).

The first 30 residues, 1–30, serve as a signal peptide directing secretion; it reads MAPRRRRHTRIAGLRVVGTATLVAATTLTA. Residue C31 is the site of N-palmitoyl cysteine attachment. Residue C31 is the site of S-diacylglycerol cysteine attachment.

To M.bovis Mb2616c and M.leprae ML0489.

Its subcellular location is the cell membrane. This is an uncharacterized protein from Mycobacterium tuberculosis (strain CDC 1551 / Oshkosh).